A 707-amino-acid chain; its full sequence is Metal transporter CNNM3 (707 aa).

The helical transmembrane segment at 11–27 threads the bilayer; sequence LGWLFAALCLGNAAGEA. A glycan (N-linked (GlcNAc...) asparagine) is linked at Asn-73. Residues 130 to 308 form the CNNM transmembrane domain; the sequence is EAAPPWALGL…DPYSDLSKGV (179 aa). Helical transmembrane passes span 193–213, 221–241, and 261–281; these read CALG…AVLL, AVPA…VVPA, and LAVL…ELAA. CBS domains lie at 318 to 379 and 386 to 452; these read LTPL…CTPL and YNHP…ILDE. A Phosphoserine modification is found at Ser-661. Over residues 678–691 the composition is skewed to polar residues; that stretch reads LGEKTTTAAGSSHS. The tract at residues 678–707 is disordered; sequence LGEKTTTAAGSSHSRPGVPVEGSPGRNPGV. Residue Ser-700 is modified to Phosphoserine.

This sequence belongs to the ACDP family. Widely expressed. Expressed at higher level in heart and spleen.

Its subcellular location is the cell membrane. Probable metal transporter. The protein is Metal transporter CNNM3 (CNNM3) of Homo sapiens (Human).